The chain runs to 107 residues: Prepilin peptidase-dependent protein C (107 aa).

The propeptide occupies 1-10 (MSASLKNQQG). Residue Phe11 is modified to N-methylphenylalanine. The chain crosses the membrane as a helical span at residues 11-30 (FSLPEVMLAMVLMVMIVTAL).

It is found in the membrane. Its function is as follows. Not yet known. The sequence is that of Prepilin peptidase-dependent protein C (ppdC) from Escherichia coli (strain K12).